A 503-amino-acid chain; its full sequence is Probable cytosol aminopeptidase (503 aa).

Positions 270 and 275 each coordinate Mn(2+). The active site involves lysine 282. 3 residues coordinate Mn(2+): aspartate 293, aspartate 352, and glutamate 354. The active site involves arginine 356.

The protein belongs to the peptidase M17 family. Requires Mn(2+) as cofactor.

It localises to the cytoplasm. The catalysed reaction is Release of an N-terminal amino acid, Xaa-|-Yaa-, in which Xaa is preferably Leu, but may be other amino acids including Pro although not Arg or Lys, and Yaa may be Pro. Amino acid amides and methyl esters are also readily hydrolyzed, but rates on arylamides are exceedingly low.. It carries out the reaction Release of an N-terminal amino acid, preferentially leucine, but not glutamic or aspartic acids.. In terms of biological role, presumably involved in the processing and regular turnover of intracellular proteins. Catalyzes the removal of unsubstituted N-terminal amino acids from various peptides. The chain is Probable cytosol aminopeptidase from Yersinia pseudotuberculosis serotype O:1b (strain IP 31758).